Consider the following 418-residue polypeptide: Alditol oxidase (418 aa).

Positions Ile13–Ala179 constitute an FAD-binding PCMH-type domain. Residues Val41 to Ser47, Ser106, Ser111, Gly114, Thr118 to His121, and Val169 contribute to the FAD site. His46 carries the pros-8alpha-FAD histidine modification. Residue Ser106 coordinates D-sorbitol. Ser106 provides a ligand contact to xylitol. Residues Glu320, Arg322, and Thr345 each contribute to the D-sorbitol site. Residues Glu320, Arg322, and Thr345 each contribute to the xylitol site. Arg322 provides a ligand contact to FAD. An FAD-binding site is contributed by His372. Lys375 serves as a coordination point for D-sorbitol. Lys375 is a xylitol binding site.

Belongs to the oxygen-dependent FAD-linked oxidoreductase family. As to quaternary structure, monomer. FAD is required as a cofactor.

The catalysed reaction is an alditol + O2 = an aldose + H2O2. The enzyme catalyses xylitol + O2 = D-xylose + H2O2. It catalyses the reaction D-sorbitol + O2 = D-glucose + H2O2. In terms of biological role, oxidase that performs selective oxidation of the terminal primary hydroxyl group of several alditols, with a reduction of O2 to H2O2. Shows highest activity on xylitol and D-sorbitol, and a poor efficiency with D-mannitol and L-threitol. The protein is Alditol oxidase (xyoA) of Streptomyces coelicolor (strain ATCC BAA-471 / A3(2) / M145).